The chain runs to 185 residues: ATP synthase subunit b, chloroplastic (185 aa).

The chain crosses the membrane as a helical span at residues 27-49; that stretch reads LATNPINLSVVLGVLIFFGKGVL.

The protein belongs to the ATPase B chain family. As to quaternary structure, F-type ATPases have 2 components, F(1) - the catalytic core - and F(0) - the membrane proton channel. F(1) has five subunits: alpha(3), beta(3), gamma(1), delta(1), epsilon(1). F(0) has four main subunits: a(1), b(1), b'(1) and c(10-14). The alpha and beta chains form an alternating ring which encloses part of the gamma chain. F(1) is attached to F(0) by a central stalk formed by the gamma and epsilon chains, while a peripheral stalk is formed by the delta, b and b' chains.

Its subcellular location is the plastid. The protein resides in the chloroplast thylakoid membrane. Its function is as follows. F(1)F(0) ATP synthase produces ATP from ADP in the presence of a proton or sodium gradient. F-type ATPases consist of two structural domains, F(1) containing the extramembraneous catalytic core and F(0) containing the membrane proton channel, linked together by a central stalk and a peripheral stalk. During catalysis, ATP synthesis in the catalytic domain of F(1) is coupled via a rotary mechanism of the central stalk subunits to proton translocation. In terms of biological role, component of the F(0) channel, it forms part of the peripheral stalk, linking F(1) to F(0). This Vitis vinifera (Grape) protein is ATP synthase subunit b, chloroplastic.